Reading from the N-terminus, the 311-residue chain is Formimidoylglutamase (311 aa).

Mn(2+)-binding residues include His-130, Asp-155, His-157, Asp-159, Cys-242, and Asp-244.

The protein belongs to the arginase family. It depends on Mn(2+) as a cofactor.

It catalyses the reaction N-formimidoyl-L-glutamate + H2O = formamide + L-glutamate. Its pathway is amino-acid degradation; L-histidine degradation into L-glutamate; L-glutamate from N-formimidoyl-L-glutamate (hydrolase route): step 1/1. In terms of biological role, catalyzes the conversion of N-formimidoyl-L-glutamate to L-glutamate and formamide. This Staphylococcus aureus (strain bovine RF122 / ET3-1) protein is Formimidoylglutamase.